The chain runs to 94 residues: MFKVNEYFDGTVKSIAFGTAEGPATIGVMAAGEYEFGTSQREIMHVVSGALTVKLPDSSDWETFAAGSQFNVPANSKFQLKVAVDTAYLCEYRG.

This sequence belongs to the nucleoside phosphorylase PpnP family.

It carries out the reaction a purine D-ribonucleoside + phosphate = a purine nucleobase + alpha-D-ribose 1-phosphate. It catalyses the reaction adenosine + phosphate = alpha-D-ribose 1-phosphate + adenine. The enzyme catalyses cytidine + phosphate = cytosine + alpha-D-ribose 1-phosphate. The catalysed reaction is guanosine + phosphate = alpha-D-ribose 1-phosphate + guanine. It carries out the reaction inosine + phosphate = alpha-D-ribose 1-phosphate + hypoxanthine. It catalyses the reaction thymidine + phosphate = 2-deoxy-alpha-D-ribose 1-phosphate + thymine. The enzyme catalyses uridine + phosphate = alpha-D-ribose 1-phosphate + uracil. The catalysed reaction is xanthosine + phosphate = alpha-D-ribose 1-phosphate + xanthine. Catalyzes the phosphorolysis of diverse nucleosides, yielding D-ribose 1-phosphate and the respective free bases. Can use uridine, adenosine, guanosine, cytidine, thymidine, inosine and xanthosine as substrates. Also catalyzes the reverse reactions. The chain is Pyrimidine/purine nucleoside phosphorylase from Pseudomonas fluorescens (strain Pf0-1).